The chain runs to 297 residues: Glutamyl-Q tRNA(Asp) synthetase (297 aa).

L-glutamate is bound by residues 7–11 (RFAPS) and Glu43. A 'HIGH' region motif is present at residues 10-20 (PSPTGPLHFGS). Zn(2+) contacts are provided by Cys99, Cys101, Tyr122, and Cys126. The L-glutamate site is built by Tyr182 and Arg200. Residues 238–242 (KLSKQ) carry the 'KMSKS' region motif. Residue Lys241 coordinates ATP.

Belongs to the class-I aminoacyl-tRNA synthetase family. GluQ subfamily. Requires Zn(2+) as cofactor.

Catalyzes the tRNA-independent activation of glutamate in presence of ATP and the subsequent transfer of glutamate onto a tRNA(Asp). Glutamate is transferred on the 2-amino-5-(4,5-dihydroxy-2-cyclopenten-1-yl) moiety of the queuosine in the wobble position of the QUC anticodon. The chain is Glutamyl-Q tRNA(Asp) synthetase from Burkholderia pseudomallei (strain K96243).